The primary structure comprises 314 residues: tRNA pseudouridine synthase B (314 aa).

A substrate-binding site is contributed by histidine 43. The active-site Nucleophile is aspartate 48. 3 residues coordinate substrate: tyrosine 76, tyrosine 179, and leucine 200.

Belongs to the pseudouridine synthase TruB family. Type 1 subfamily.

The enzyme catalyses uridine(55) in tRNA = pseudouridine(55) in tRNA. Functionally, responsible for synthesis of pseudouridine from uracil-55 in the psi GC loop of transfer RNAs. In Enterobacter sp. (strain 638), this protein is tRNA pseudouridine synthase B.